We begin with the raw amino-acid sequence, 298 residues long: GTP cyclohydrolase FolE2 (298 aa).

Belongs to the GTP cyclohydrolase IV family.

It carries out the reaction GTP + H2O = 7,8-dihydroneopterin 3'-triphosphate + formate + H(+). It functions in the pathway cofactor biosynthesis; 7,8-dihydroneopterin triphosphate biosynthesis; 7,8-dihydroneopterin triphosphate from GTP: step 1/1. In terms of biological role, converts GTP to 7,8-dihydroneopterin triphosphate. The chain is GTP cyclohydrolase FolE2 from Pseudomonas fluorescens (strain SBW25).